A 107-amino-acid polypeptide reads, in one-letter code: Nucleoid-associated protein A1I_00660 (107 aa).

Residues 81 to 107 form a disordered region; the sequence is KCDSDSQNSMSGALSGMSLPPGFKMPF.

This sequence belongs to the YbaB/EbfC family. In terms of assembly, homodimer.

The protein localises to the cytoplasm. It is found in the nucleoid. Its function is as follows. Binds to DNA and alters its conformation. May be involved in regulation of gene expression, nucleoid organization and DNA protection. In Rickettsia bellii (strain OSU 85-389), this protein is Nucleoid-associated protein A1I_00660.